A 1255-amino-acid chain; its full sequence is Protein diaphanous homolog 1 (1255 aa).

Met1 carries the post-translational modification N-acetylmethionine. The segment covering 1–12 (MEPSGGGLGPGR) has biased composition (gly residues). Positions 1–73 (MEPSGGGLGP…ASYGDDPTAQ (73 aa)) are disordered. A Phosphoserine modification is found at Ser22. The span at 58 to 73 (AHRNSSASYGDDPTAQ) shows a compositional bias: polar residues. The 366-residue stretch at 75-440 (LQDISDEQVL…QIVLHKNGTD (366 aa)) folds into the GBD/FH3 domain. Residues 460–562 (IDKTKVEKSE…MASLSAVVVA (103 aa)) adopt a coiled-coil conformation. The segment at 567 to 737 (SSAAVPPAPP…MGVPPPPPFG (171 aa)) is disordered. Positions 585 to 736 (IPPPPPPPPL…GMGVPPPPPF (152 aa)) are enriched in pro residues. The FH1 domain maps to 586–747 (PPPPPPPPLP…FGVPAAPVLP (162 aa)). Position 751 is a phosphothreonine (Thr751). Positions 752 to 1154 (PKKVYKPEVQ…MRRAKLAKEK (403 aa)) constitute an FH2 domain. A coiled-coil region spans residues 1027–1179 (VEKASRVSAE…IDMNAEGDET (153 aa)). Residues Lys1040 and Lys1086 each carry the N6-acetyllysine modification. Tyr1104 is modified (phosphotyrosine). One can recognise a DAD domain in the interval 1177 to 1205 (DETGVMDSLLEALQSGAAFRRKRGPRQVN). Ser1237 is modified (phosphoserine).

This sequence belongs to the formin homology family. Diaphanous subfamily. Homodimer. Interacts with the GTP-bound form of RHOA. Interacts with RHOC, PFY1, MAPRE1, BAIAP2 and APC. Interacts with APC; acts as a scaffold protein for MAPRE1 and APC to stabilize microtubules and promote cell migration. Interacts with SCAI. Interacts with DCAF7, via FH2 domain. Interacts with NCDN. Interacts with OSBPL10, OSBPL2, VIM, TUBB and DYN1. Post-translationally, phosphorylation at Thr-751 is stimulated by cAMP and regulates stability, complex formation and mitochondrial movement. In terms of tissue distribution, widely expressed. In the organ of Corti, it is expressed at the outer and inner hair cell layers. Expression at the inner hair cell layer is restricted to inner pillar cells. Detected in cochlear spiral ganglion neurons.

Its subcellular location is the cell membrane. It is found in the cell projection. It localises to the ruffle membrane. The protein localises to the cytoplasm. The protein resides in the cytoskeleton. Its subcellular location is the microtubule organizing center. It is found in the centrosome. It localises to the spindle. The protein localises to the nucleus. In terms of biological role, actin nucleation and elongation factor required for the assembly of F-actin structures, such as actin cables and stress fibers. Binds to the barbed end of the actin filament and slows down actin polymerization and depolymerization. Required for cytokinesis, and transcriptional activation of the serum response factor. DFR proteins couple Rho and Src tyrosine kinase during signaling and the regulation of actin dynamics. Functions as a scaffold protein for MAPRE1 and APC to stabilize microtubules and promote cell migration. Has neurite outgrowth promoting activity. Acts in a Rho-dependent manner to recruit PFY1 to the membrane. The MEMO1-RHOA-DIAPH1 signaling pathway plays an important role in ERBB2-dependent stabilization of microtubules at the cell cortex. It controls the localization of APC and CLASP2 to the cell membrane, via the regulation of GSK3B activity. In turn, membrane-bound APC allows the localization of the MACF1 to the cell membrane, which is required for microtubule capture and stabilization. Plays a role in the regulation of cell morphology and cytoskeletal organization. Required in the control of cell shape. Also acts as an actin nucleation and elongation factor in the nucleus by promoting nuclear actin polymerization inside the nucleus to drive serum-dependent SRF-MRTFA activity. This chain is Protein diaphanous homolog 1 (Diaph1), found in Mus musculus (Mouse).